Here is a 164-residue protein sequence, read N- to C-terminus: Galectin-3 (164 aa).

In terms of domain architecture, Galectin spans 9–154 (STVDLSEPLK…FSDVLGVTVL (146 aa)). Residues N45, R64, N73, R81, E84, and N138 each coordinate a carbohydrate.

Homotetramer. Oligomerization is required for carbohydrate binding.

The protein resides in the secreted. Its subcellular location is the extracellular space. It is found in the extracellular matrix. The protein localises to the cell wall. Binds complex carbohydrates, such as chitooligosaccharides. Does not bind lactose. May play a role in fruiting body formation. In Coprinopsis cinerea (Inky cap fungus), this protein is Galectin-3 (Cgl3).